Consider the following 168-residue polypeptide: MAVLEILTAPDPRLRVQSKQVTDVASVQTLIDDLLDTLYATDNGIGLAAPQVGREEAIVVIDLSDNRDQPLVLINPKVVSGSNKEMGQEGCLSVPDYYADVERYTSVVVEALDREGKPLRIETSDFLAIVMQHEIDHLSGNLFIDYLSPLKQQMAMKKVKKHVKNRAR.

The Fe cation site is built by Cys91 and His133. The active site involves Glu134. Position 137 (His137) interacts with Fe cation.

The protein belongs to the polypeptide deformylase family. Fe(2+) serves as cofactor.

The enzyme catalyses N-terminal N-formyl-L-methionyl-[peptide] + H2O = N-terminal L-methionyl-[peptide] + formate. Removes the formyl group from the N-terminal Met of newly synthesized proteins. Requires at least a dipeptide for an efficient rate of reaction. N-terminal L-methionine is a prerequisite for activity but the enzyme has broad specificity at other positions. This chain is Peptide deformylase 2, found in Vibrio cholerae serotype O1 (strain ATCC 39315 / El Tor Inaba N16961).